A 122-amino-acid chain; its full sequence is Large ribosomal subunit protein uL14 (122 aa).

This sequence belongs to the universal ribosomal protein uL14 family. As to quaternary structure, part of the 50S ribosomal subunit. Forms a cluster with proteins L3 and L19. In the 70S ribosome, L14 and L19 interact and together make contacts with the 16S rRNA in bridges B5 and B8.

Functionally, binds to 23S rRNA. Forms part of two intersubunit bridges in the 70S ribosome. The chain is Large ribosomal subunit protein uL14 from Corynebacterium diphtheriae (strain ATCC 700971 / NCTC 13129 / Biotype gravis).